Consider the following 476-residue polypeptide: Abscisic acid 8'-hydroxylase CYP707A1 (476 aa).

Residues 5 to 25 form a helical membrane-spanning segment; sequence FEIFLYISMFVLGYLSYYFCF. Heme is bound at residue Cys422.

This sequence belongs to the cytochrome P450 family. Requires heme as cofactor. Expressed in ovaries (specifically in ovules and placenta), sepals, petals and pedicels.

The protein localises to the membrane. The enzyme catalyses 2-cis-(+)-abscisate + reduced [NADPH--hemoprotein reductase] + O2 = (+)-8'-hydroxyabscisate + oxidized [NADPH--hemoprotein reductase] + H2O + H(+). The protein operates within plant hormone degradation; abscisic acid degradation. Functionally, involved in the oxidative degradation of abscisic acid, especially in pollinated ovaries. This Solanum lycopersicum (Tomato) protein is Abscisic acid 8'-hydroxylase CYP707A1.